A 680-amino-acid polypeptide reads, in one-letter code: DNA ligase 1 (680 aa).

Residues 35-39 (DAEYD), 84-85 (SL), and Asp-115 each bind NAD(+). The N6-AMP-lysine intermediate role is filled by Lys-117. NAD(+)-binding residues include Arg-138, Glu-175, Lys-295, and Lys-319. Zn(2+) is bound by residues Cys-413, Cys-416, Cys-431, and Cys-436. The BRCT domain maps to 599–680 (REGSQLQGLK…FANLLKGLDR (82 aa)).

The protein belongs to the NAD-dependent DNA ligase family. LigA subfamily. Mg(2+) serves as cofactor. Requires Mn(2+) as cofactor.

It catalyses the reaction NAD(+) + (deoxyribonucleotide)n-3'-hydroxyl + 5'-phospho-(deoxyribonucleotide)m = (deoxyribonucleotide)n+m + AMP + beta-nicotinamide D-nucleotide.. Its function is as follows. DNA ligase that catalyzes the formation of phosphodiester linkages between 5'-phosphoryl and 3'-hydroxyl groups in double-stranded DNA using NAD as a coenzyme and as the energy source for the reaction. It is essential for DNA replication and repair of damaged DNA. This Nitratidesulfovibrio vulgaris (strain DP4) (Desulfovibrio vulgaris) protein is DNA ligase 1.